The chain runs to 401 residues: Glyceraldehyde-3-phosphate dehydrogenase A, chloroplastic (401 aa).

The transit peptide at 1–65 (MASNMLSIAN…RSSQNGVVEA (65 aa)) directs the protein to the chloroplast. Residues 76–77 (RI), aspartate 100, and arginine 145 each bind NADP(+). D-glyceraldehyde 3-phosphate-binding positions include 217–219 (SCT), threonine 248, arginine 263, 276–277 (TG), and arginine 299. Cysteine 218 acts as the Nucleophile in catalysis. Asparagine 381 is an NADP(+) binding site.

The protein belongs to the glyceraldehyde-3-phosphate dehydrogenase family. As to quaternary structure, tetramer of either four A chains (GAPDH 2) or two A and two B chains (GAPDH 1).

Its subcellular location is the plastid. It is found in the chloroplast. The enzyme catalyses D-glyceraldehyde 3-phosphate + phosphate + NADP(+) = (2R)-3-phospho-glyceroyl phosphate + NADPH + H(+). The protein operates within carbohydrate biosynthesis; Calvin cycle. This is Glyceraldehyde-3-phosphate dehydrogenase A, chloroplastic (GAPA) from Spinacia oleracea (Spinach).